A 651-amino-acid chain; its full sequence is Epithelial sodium channel subunit beta (651 aa).

Over 1 to 50 (MFLKRWFIRALHRLQKGPGYGYSELFVWYCNNTNTHGPKRLIIEGPKKKT) the chain is Cytoplasmic. Residues 51 to 71 (LWSLFTVTFACLVFWQWGLLI) traverse the membrane as a helical segment. Over 72–541 (QTYLSWGVSV…GGQFGFWMGG (470 aa)) the chain is Extracellular. Cystine bridges form between C98-C281, C205-C212, C258-C265, C370-C457, C395-C453, C399-C449, C408-C435, and C410-C424. A helical membrane pass occupies residues 542–562 (SVLCIIEFGEVFIDCIWIAVI). Topologically, residues 563-651 (RFVKWYKNRK…TEHHSDSEDL (89 aa)) are cytoplasmic. The disordered stretch occupies residues 612 to 651 (QPPDLYLPTTLEIPGTPPPKYDSLRVHPIDTEHHSDSEDL). The span at 633-651 (DSLRVHPIDTEHHSDSEDL) shows a compositional bias: basic and acidic residues.

Belongs to the amiloride-sensitive sodium channel (TC 1.A.6) family. SCNN1B subfamily. Component of the heterotrimeric epithelial sodium channel (ENaC) composed of an alpha/SCNN1A, a beta/SCNN1B and a gamma/SCNN1G subunit. In terms of tissue distribution, strongly expressed in gill, kidney and rectum and more weakly in brain, eye, liver and muscle.

The protein resides in the apical cell membrane. The protein localises to the cytoplasmic vesicle membrane. The catalysed reaction is Na(+)(in) = Na(+)(out). Originally identified and characterized by its inhibition by the diuretic drug amiloride. Functionally, this is one of the three pore-forming subunits of the heterotrimeric epithelial sodium channel (ENaC), a critical regulator of sodium balance and fluid homeostasis. ENaC operates in epithelial tissues, where it mediates the electrodiffusion of sodium ions from extracellular fluid through the apical membrane of cells, with water following osmotically. The chain is Epithelial sodium channel subunit beta from Neoceratodus forsteri (Australian lungfish).